The chain runs to 97 residues: DNA/RNA-binding protein Alba 1 (97 aa).

The residue at position 2 (Ser-2) is an N-acetylserine; by ard1 acetylase. The RNA site is built by Lys-16, Lys-17, and Tyr-22. Lys-16 is subject to N6,N6,N6-trimethyllysine; alternate. Position 16 is an N6,N6-dimethyllysine; alternate (Lys-16). Lys-16 is subject to N6-acetyllysine; alternate. Position 16 is an N6-methyllysine; alternate (Lys-16). Residue Asn-31 is modified to Deamidated asparagine; partial. The residue at position 32 (Gln-32) is a Deamidated glutamine; partial. Residue Lys-40 is modified to N6-methyllysine; partial. Residues Arg-42 and Arg-44 each contribute to the RNA site. Lys-48 bears the N6-acetyllysine; partial mark. Asp-51 is modified (aspartate methyl ester; partial). Deamidated asparagine; partial is present on Asn-58. The residue at position 64 (Lys-64) is an N6-acetyllysine; alternate; partial. Lys-64 bears the N6-methyllysine; alternate; partial mark. Lys-68 carries the N6-acetyllysine; partial modification. Position 75 is an N5-methylglutamine; partial (Gln-75). The residue at position 81 (Asp-81) is an Aspartate methyl ester; partial. Position 97 is an N6-methyllysine; partial (Lys-97).

The protein belongs to the histone-like Alba family. Forms homodimers and higher order oligomers, e.g. homotetramers. In terms of processing, acetylated. Acetylation at Lys-16 by the Pat acetylase decreases DNA-binding affinity. Deacetylation at Lys-16 by the CobB deacetylase increases DNA-binding affinity. Acetylation at Ser-2 is involved in the regulation of the turnover of the protein.

The protein localises to the cytoplasm. Its subcellular location is the chromosome. Functionally, binds double-stranded DNA tightly but without sequence specificity. Involved in DNA compaction. Possesses DNA endonuclease activity. Prevents transcription after DNA binding. Binds single-stranded DNA and RNA in vitro. Binds rRNA and mRNA in vivo. May play a role in maintaining the structural and functional stability of RNA, and, perhaps, ribosomes. Binds double-stranded RNA (dsRNA) and exhibits RNA chaperone activity. Required for normal growth. This Saccharolobus islandicus (strain REY15A) (Sulfolobus islandicus) protein is DNA/RNA-binding protein Alba 1.